Consider the following 525-residue polypeptide: GMP synthase [glutamine-hydrolyzing] (525 aa).

The region spanning 16–205 (PVLVVDFGAQ…LHDFAGLGAD (190 aa)) is the Glutamine amidotransferase type-1 domain. Catalysis depends on Cys93, which acts as the Nucleophile. Residues His179 and Glu181 contribute to the active site. The 194-residue stretch at 206–399 (WTAANIAGVL…LGLPEEIVAR (194 aa)) folds into the GMPS ATP-PPase domain. An ATP-binding site is contributed by 233-239 (SGGVDSA).

As to quaternary structure, homodimer.

It catalyses the reaction XMP + L-glutamine + ATP + H2O = GMP + L-glutamate + AMP + diphosphate + 2 H(+). Its pathway is purine metabolism; GMP biosynthesis; GMP from XMP (L-Gln route): step 1/1. In terms of biological role, catalyzes the synthesis of GMP from XMP. This is GMP synthase [glutamine-hydrolyzing] from Mycolicibacterium paratuberculosis (strain ATCC BAA-968 / K-10) (Mycobacterium paratuberculosis).